An 805-amino-acid chain; its full sequence is Polyribonucleotide nucleotidyltransferase (805 aa).

Mg(2+) contacts are provided by D491 and D497. Residues 558–617 form the KH domain; it reads PRMESMIIDKNKIKNVIGTGGKNVREICEKTGVKIEISQDGTVMIYAVSRDAVEEAKNMI. Positions 627 to 694 constitute an S1 motif domain; that stretch reads GKVFSGVISE…DKDHVQLSMR (68 aa). The segment at 702–805 is disordered; the sequence is DLLEHESYSS…GGGNKKPRFF (104 aa).

The protein belongs to the polyribonucleotide nucleotidyltransferase family. Mg(2+) serves as cofactor.

It is found in the cytoplasm. It catalyses the reaction RNA(n+1) + phosphate = RNA(n) + a ribonucleoside 5'-diphosphate. Its function is as follows. Involved in mRNA degradation. Catalyzes the phosphorolysis of single-stranded polyribonucleotides processively in the 3'- to 5'-direction. This chain is Polyribonucleotide nucleotidyltransferase, found in Anaplasma marginale (strain Florida).